We begin with the raw amino-acid sequence, 153 residues long: Small heat shock protein HspB (153 aa).

Residues 30 to 140 enclose the sHSP domain; that stretch reads AGTEDNYPPC…KPRRISISGS (111 aa).

Belongs to the small heat shock protein (HSP20) family.

The sequence is that of Small heat shock protein HspB (hspB) from Bradyrhizobium diazoefficiens (strain JCM 10833 / BCRC 13528 / IAM 13628 / NBRC 14792 / USDA 110).